The chain runs to 182 residues: MNKLSTKLVVAIGIGSALYGILGLWGFTIAPNTFIKPALAILTVFGALFGPVAGLLIGLIGHTVTDTIAGWGIWWGWVISSGIIGFTMGFIQKRVGFSVKNGTYNKGDISYLAITGLIGIVIAIIFAGAFDIIVMGEPFDKIVIQVLGATIADVIVFLVLGLPITIGLAKSNKKHTHLKIEK.

A run of 5 helical transmembrane segments spans residues 9-29, 40-60, 71-91, 114-134, and 142-162; these read VVAI…GFTI, AILT…IGLI, WGIW…MGFI, ITGL…DIIV, and IVIQ…VLGL.

This sequence belongs to the UPF0397 family.

The protein localises to the cell membrane. The sequence is that of UPF0397 protein BCAH820_2657 from Bacillus cereus (strain AH820).